The primary structure comprises 227 residues: Ubiquitin domain-containing protein 1 (227 aa).

A compositionally biased stretch (basic and acidic residues) spans 1–14; it reads MGGCVGRERAETRG. Residues 1 to 45 are disordered; that stretch reads MGGCVGRERAETRGRGSRTQRKRGGRNEPLKKDKPKWKSDYPMTE. Positions 15–24 are enriched in basic residues; it reads RGSRTQRKRG. The segment covering 25-39 has biased composition (basic and acidic residues); sequence GRNEPLKKDKPKWKS. The Ubiquitin-like domain maps to 150–225; the sequence is FQLKVRLSTG…IQVIVNQPAP (76 aa).

Its function is as follows. May be involved in the regulation of cellular senescence through a positive feedback loop with TP53. The protein is Ubiquitin domain-containing protein 1 (ubtd1) of Danio rerio (Zebrafish).